A 350-amino-acid polypeptide reads, in one-letter code: Histidinol-phosphate aminotransferase 1 (350 aa).

At Lys210 the chain carries N6-(pyridoxal phosphate)lysine.

This sequence belongs to the class-II pyridoxal-phosphate-dependent aminotransferase family. Histidinol-phosphate aminotransferase subfamily. As to quaternary structure, homodimer. Pyridoxal 5'-phosphate is required as a cofactor.

The catalysed reaction is L-histidinol phosphate + 2-oxoglutarate = 3-(imidazol-4-yl)-2-oxopropyl phosphate + L-glutamate. Its pathway is amino-acid biosynthesis; L-histidine biosynthesis; L-histidine from 5-phospho-alpha-D-ribose 1-diphosphate: step 7/9. The sequence is that of Histidinol-phosphate aminotransferase 1 from Pseudomonas fluorescens (strain ATCC BAA-477 / NRRL B-23932 / Pf-5).